Consider the following 96-residue polypeptide: Aspartyl/glutamyl-tRNA(Asn/Gln) amidotransferase subunit C (96 aa).

This sequence belongs to the GatC family. In terms of assembly, heterotrimer of A, B and C subunits.

It carries out the reaction L-glutamyl-tRNA(Gln) + L-glutamine + ATP + H2O = L-glutaminyl-tRNA(Gln) + L-glutamate + ADP + phosphate + H(+). The catalysed reaction is L-aspartyl-tRNA(Asn) + L-glutamine + ATP + H2O = L-asparaginyl-tRNA(Asn) + L-glutamate + ADP + phosphate + 2 H(+). Its function is as follows. Allows the formation of correctly charged Asn-tRNA(Asn) or Gln-tRNA(Gln) through the transamidation of misacylated Asp-tRNA(Asn) or Glu-tRNA(Gln) in organisms which lack either or both of asparaginyl-tRNA or glutaminyl-tRNA synthetases. The reaction takes place in the presence of glutamine and ATP through an activated phospho-Asp-tRNA(Asn) or phospho-Glu-tRNA(Gln). In Trichormus variabilis (strain ATCC 29413 / PCC 7937) (Anabaena variabilis), this protein is Aspartyl/glutamyl-tRNA(Asn/Gln) amidotransferase subunit C.